Here is a 181-residue protein sequence, read N- to C-terminus: ATP synthase subunit delta (181 aa).

Belongs to the ATPase delta chain family. As to quaternary structure, F-type ATPases have 2 components, F(1) - the catalytic core - and F(0) - the membrane proton channel. F(1) has five subunits: alpha(3), beta(3), gamma(1), delta(1), epsilon(1). F(0) has three main subunits: a(1), b(2) and c(10-14). The alpha and beta chains form an alternating ring which encloses part of the gamma chain. F(1) is attached to F(0) by a central stalk formed by the gamma and epsilon chains, while a peripheral stalk is formed by the delta and b chains.

Its subcellular location is the cell inner membrane. Functionally, f(1)F(0) ATP synthase produces ATP from ADP in the presence of a proton or sodium gradient. F-type ATPases consist of two structural domains, F(1) containing the extramembraneous catalytic core and F(0) containing the membrane proton channel, linked together by a central stalk and a peripheral stalk. During catalysis, ATP synthesis in the catalytic domain of F(1) is coupled via a rotary mechanism of the central stalk subunits to proton translocation. In terms of biological role, this protein is part of the stalk that links CF(0) to CF(1). It either transmits conformational changes from CF(0) to CF(1) or is implicated in proton conduction. The chain is ATP synthase subunit delta from Hyphomonas neptunium (strain ATCC 15444).